Here is a 640-residue protein sequence, read N- to C-terminus: Probable potassium transport system protein Kup 1 (640 aa).

The next 12 helical transmembrane spans lie at 24–44 (LGALSLAAIGVVYGDIGTSPL), 67–87 (IASLVFWAIILVVTIKYVLFV), 116–136 (VGPLVGLGLFGAALFIGDGMI), 154–174 (PFFAPYVVPLTLIVLVALFTI), 186–206 (FGPVMVVWFLTIAALGLTEVV), 222–242 (TFLFTHGWIAFVVMGSVVLAV), 264–284 (WFALVLPALTLNYFGQAALIL), 296–316 (MLVPGWGLYPMVILATLATVI), 354–374 (IYIPRANWGLLLGIVALVVGF), 382–402 (AAYGIAVTGTMAATTILALVV), 411–431 (LWLCLGLGAVFLAVDLGFLGA), and 436–456 (VTQGGWFPLAVGLGMLLLMAT).

This sequence belongs to the HAK/KUP transporter (TC 2.A.72) family.

The protein resides in the cell inner membrane. The enzyme catalyses K(+)(in) + H(+)(in) = K(+)(out) + H(+)(out). Functionally, transport of potassium into the cell. Likely operates as a K(+):H(+) symporter. The polypeptide is Probable potassium transport system protein Kup 1 (Paramagnetospirillum magneticum (strain ATCC 700264 / AMB-1) (Magnetospirillum magneticum)).